The chain runs to 293 residues: Bifunctional protein FolD (293 aa).

NADP(+) contacts are provided by residues 162–164 (GQS) and I227.

It belongs to the tetrahydrofolate dehydrogenase/cyclohydrolase family. Homodimer.

The enzyme catalyses (6R)-5,10-methylene-5,6,7,8-tetrahydrofolate + NADP(+) = (6R)-5,10-methenyltetrahydrofolate + NADPH. It carries out the reaction (6R)-5,10-methenyltetrahydrofolate + H2O = (6R)-10-formyltetrahydrofolate + H(+). It functions in the pathway one-carbon metabolism; tetrahydrofolate interconversion. Catalyzes the oxidation of 5,10-methylenetetrahydrofolate to 5,10-methenyltetrahydrofolate and then the hydrolysis of 5,10-methenyltetrahydrofolate to 10-formyltetrahydrofolate. The protein is Bifunctional protein FolD of Metamycoplasma arthritidis (strain 158L3-1) (Mycoplasma arthritidis).